Consider the following 142-residue polypeptide: Transcription antitermination protein NusB (142 aa).

It belongs to the NusB family. In terms of assembly, monomer or homodimer; in equilibrium, with a preference for the monomer. Dimerization may be employed to package NusB in an inactive form until recruitment into antitermination complexes.

In terms of biological role, involved in transcription antitermination. Required for transcription of ribosomal RNA (rRNA) genes. Binds specifically to the boxA antiterminator sequence of the ribosomal RNA (rrn) operons. The polypeptide is Transcription antitermination protein NusB (Thermotoga maritima (strain ATCC 43589 / DSM 3109 / JCM 10099 / NBRC 100826 / MSB8)).